Here is a 62-residue protein sequence, read N- to C-terminus: Amolopin-p-MT1 (62 aa).

The signal sequence occupies residues 1 to 22; the sequence is MFTLKKSLLLLFFLGTISLSLC. A propeptide spans 23–42 (removed in mature form); sequence EQERGADEEENGGEVTEEEV.

It belongs to the frog skin active peptide (FSAP) family. Brevinin subfamily. As to expression, expressed by the skin glands.

The protein localises to the secreted. Antimicrobial peptide. Active against a variety of Gram-negative and Gram-positive bacterial strains. Not active against fungi. Shows weak hemolytic activity against human erythrocytes. The chain is Amolopin-p-MT1 from Amolops mantzorum (Sichuan torrent frog).